The primary structure comprises 697 residues: Large T antigen (697 aa).

Residue M1 is modified to N-acetylmethionine; by host. The region spanning 12 to 75 is the J domain; it reads ELMDLLQITR…LMEIRSQCGS (64 aa). Positions 131 to 135 are binding to host RB1 protein and transforming activity; that stretch reads LFCSE. S134 and S140 each carry phosphoserine; by host. A disordered region spans residues 136 to 198; sequence TMSSSSDEDT…PKRKKTEEKK (63 aa). Residues 148–158 are compositionally biased toward pro residues; the sequence is AAQPPPPPAPS. Residues 159–169 show a composition bias toward acidic residues; sequence PEEEDEIEFVE. A compositionally biased stretch (low complexity) spans 170-183; it reads ETPSSCDGSSSQSS. Position 187 is a phosphothreonine; by host (T187). Residues 188 to 196 carry the Nuclear localization signal motif; sequence PPKRKKTEE. A DNA-binding region (T-ag OBD) is located at residues 203-323; it reads PVCLYSFLSH…EENKPGVSMF (121 aa). The T-ag D1-type zinc finger occupies 330–422; sequence EQSVNWQEIC…KRLKLVECSR (93 aa). C367, C370, H378, and H382 together coordinate Zn(2+). Residues 463–623 form the SF3 helicase domain; sequence NSWDVFQNIL…AYLKQSLEKS (161 aa). 489 to 496 is an ATP binding site; sequence GPINSGKT.

As to quaternary structure, forms homohexamers in the presence of ATP. Interacts with host HDAC1. Interacts (via LXCXE domain) with host RB1; the interaction induces the aberrant dissociation of RB1-E2F1 complex thereby disrupting RB1's activity. Interacts (via LXCXE domain) with host pRB-related proteins RBL1 and RBL2. Interacts (via C-terminus) with host TOP1 and POLA1 allowing DNA replication. Interacts with host TP53, inhibiting TP53 binding to DNA. Interacts with host preinitiation complex components TBP, TFIIA and TFIID to regulate transcription initiation. Mg(2+) is required as a cofactor. In terms of processing, phosphorylated on both serine and threonine residues. Small t antigen inhibits the dephosphorylation by the AC form of PP2A. Post-translationally, O-Glycosylated near the C-terminal region. Acetylated by CBP in a TP53-dependent manner.

Its subcellular location is the host nucleus. The catalysed reaction is Couples ATP hydrolysis with the unwinding of duplex DNA by translocating in the 3'-5' direction.. It carries out the reaction ATP + H2O = ADP + phosphate + H(+). Its function is as follows. Isoform large T antigen is a key early protein essential for both driving viral replication and inducing cellular transformation. Plays a role in viral genome replication by driving entry of quiescent cells into the cell cycle and by autoregulating the synthesis of viral early mRNA. Displays highly oncogenic activities by corrupting the host cellular checkpoint mechanisms that guard cell division and the transcription, replication, and repair of DNA. Participates in the modulation of cellular gene expression preceeding viral DNA replication. This step involves binding to host key cell cycle regulators retinoblastoma protein RB1/pRb and TP53. Induces the disassembly of host E2F1 transcription factors from RB1, thus promoting transcriptional activation of E2F1-regulated S-phase genes. Inhibits host TP53 binding to DNA, abrogating the ability of TP53 to stimulate gene expression. Plays the role of a TFIID-associated factor (TAF) in transcription initiation for all three RNA polymerases, by stabilizing the TBP-TFIIA complex on promoters. Initiates viral DNA replication and unwinding via interactions with the viral origin of replication. Binds two adjacent sites in the SV40 origin. The replication fork movement is facilitated by Large T antigen helicase activity. Has processive 3'-5' DNA helicase activity which requires a short 3' single-stranded region and ATP. Activates the transcription of viral late mRNA, through host TBP and TFIIA stabilization. Interferes with histone deacetylation mediated by HDAC1, leading to activation of transcription. In Chlorocebus aethiops (Green monkey), this protein is Large T antigen.